We begin with the raw amino-acid sequence, 221 residues long: UPF0758 protein KPN78578_39390 (221 aa).

Positions 99 to 221 (ALVTPSMTRE…YVSFAERGWI (123 aa)) constitute an MPN domain. Residues His-170, His-172, and Asp-183 each coordinate Zn(2+). The short motif at 170–183 (HNHPSGSPEPSQAD) is the JAMM motif element.

The protein belongs to the UPF0758 family. YicR subfamily.

In Klebsiella pneumoniae subsp. pneumoniae (strain ATCC 700721 / MGH 78578), this protein is UPF0758 protein KPN78578_39390.